A 278-amino-acid chain; its full sequence is MKETFIHPTALVEPGVELGQGVSVGPFCHVQSGAIIGNDCELMSHVVITGATTLGAGTKVYPHAILGCDPQNNKHKGGPTRLNVGVNCIIREGVTMHKGSDNARGYTSIGDNCSFLAYAHVAHDCDIGDYVTFSNNVMIGGHTSIGHHAILGGGAAVHQFVRVGHHAFIGGLAAVVSDLIPYGMAIGVHAHLGGLNIIGMKRSGMERKEIHNLRHAVRMLFDRTKPIRQRAQDVLAAIPDSPTVSDMISFINVDTKRAYCTPPLDAAHGGAGHDSDED.

This sequence belongs to the transferase hexapeptide repeat family. LpxA subfamily. In terms of assembly, homotrimer.

The protein localises to the cytoplasm. The enzyme catalyses a (3R)-hydroxyacyl-[ACP] + UDP-N-acetyl-alpha-D-glucosamine = a UDP-3-O-[(3R)-3-hydroxyacyl]-N-acetyl-alpha-D-glucosamine + holo-[ACP]. It functions in the pathway glycolipid biosynthesis; lipid IV(A) biosynthesis; lipid IV(A) from (3R)-3-hydroxytetradecanoyl-[acyl-carrier-protein] and UDP-N-acetyl-alpha-D-glucosamine: step 1/6. Functionally, involved in the biosynthesis of lipid A, a phosphorylated glycolipid that anchors the lipopolysaccharide to the outer membrane of the cell. The sequence is that of Acyl-[acyl-carrier-protein]--UDP-N-acetylglucosamine O-acyltransferase from Brucella abortus (strain S19).